A 341-amino-acid chain; its full sequence is 5-formaminoimidazole-4-carboxamide-1-(beta)-D-ribofuranosyl 5'-monophosphate synthetase (341 aa).

5-amino-1-(5-phospho-beta-D-ribosyl)imidazole-4-carboxamide-binding residues include H10 and T77. Residues 106-317 (DREMKEKLMR…YYNLLFNETM (212 aa)) form the ATP-grasp domain. Residues 132 to 188 (EKLS…VLAY) and E210 each bind ATP. N238 lines the 5-amino-1-(5-phospho-beta-D-ribosyl)imidazole-4-carboxamide pocket. Mg(2+) is bound by residues E277 and E290.

The protein belongs to the phosphohexose mutase family. Requires Mg(2+) as cofactor. Mn(2+) is required as a cofactor.

It carries out the reaction 5-amino-1-(5-phospho-beta-D-ribosyl)imidazole-4-carboxamide + formate + ATP = 5-formamido-1-(5-phospho-D-ribosyl)imidazole-4-carboxamide + ADP + phosphate. Its pathway is purine metabolism; IMP biosynthesis via de novo pathway; 5-formamido-1-(5-phospho-D-ribosyl)imidazole-4-carboxamide from 5-amino-1-(5-phospho-D-ribosyl)imidazole-4-carboxamide (formate route): step 1/1. In terms of biological role, catalyzes the ATP- and formate-dependent formylation of 5-aminoimidazole-4-carboxamide-1-beta-d-ribofuranosyl 5'-monophosphate (AICAR) to 5-formaminoimidazole-4-carboxamide-1-beta-d-ribofuranosyl 5'-monophosphate (FAICAR) in the absence of folates. This chain is 5-formaminoimidazole-4-carboxamide-1-(beta)-D-ribofuranosyl 5'-monophosphate synthetase, found in Nitrosopumilus maritimus (strain SCM1).